The chain runs to 65 residues: Large ribosomal subunit protein bL35c (65 aa).

Belongs to the bacterial ribosomal protein bL35 family.

The protein resides in the plastid. The protein localises to the cyanelle. This chain is Large ribosomal subunit protein bL35c (rpl35), found in Cyanophora paradoxa.